The primary structure comprises 38 residues: Augerpeptide hhe53 (38 aa).

In terms of processing, contains 2 disulfide bonds. In terms of tissue distribution, expressed by the venom duct.

It is found in the secreted. This chain is Augerpeptide hhe53, found in Hastula hectica (Sea snail).